Reading from the N-terminus, the 541-residue chain is Apolipoprotein N-acyltransferase (541 aa).

Helical transmembrane passes span 21-41 (MSWF…WYSL), 54-74 (LTSL…SWML), 89-109 (VLIS…FFIV), 116-136 (ILWC…YFLC), 157-177 (FGGF…GISF), and 189-209 (YVWL…YEYL). The CN hydrolase domain occupies 219–500 (LRVAVIQPAS…PGVLQVSLPM (282 aa)). The active-site Proton acceptor is E265. K350 is an active-site residue. C405 functions as the Nucleophile in the catalytic mechanism. A helical membrane pass occupies residues 506-526 (LYAFWGDFPMIFLSLLSIGCI).

The protein belongs to the CN hydrolase family. Apolipoprotein N-acyltransferase subfamily.

It is found in the cell inner membrane. It catalyses the reaction N-terminal S-1,2-diacyl-sn-glyceryl-L-cysteinyl-[lipoprotein] + a glycerophospholipid = N-acyl-S-1,2-diacyl-sn-glyceryl-L-cysteinyl-[lipoprotein] + a 2-acyl-sn-glycero-3-phospholipid + H(+). It participates in protein modification; lipoprotein biosynthesis (N-acyl transfer). Catalyzes the phospholipid dependent N-acylation of the N-terminal cysteine of apolipoprotein, the last step in lipoprotein maturation. The protein is Apolipoprotein N-acyltransferase of Chlamydia caviae (strain ATCC VR-813 / DSM 19441 / 03DC25 / GPIC) (Chlamydophila caviae).